Here is a 799-residue protein sequence, read N- to C-terminus: ATP synthase subunit alpha (799 aa).

An ATP synthase alpha chain region spans residues 1–549 (MTDNKNHSLI…EEVSLKPTTE (549 aa)). Residue 170 to 177 (GDRQTGKT) participates in ATP binding. The tract at residues 550-799 (TSEAVQIEEK…KGPSGFTYLK (250 aa)) is unknown.

This sequence belongs to the ATPase alpha/beta chains family. In terms of assembly, F-type ATPases have 2 components, CF(1) - the catalytic core - and CF(0) - the membrane proton channel. CF(1) has five subunits: alpha(3), beta(3), gamma(1), delta(1), epsilon(1). CF(0) has three main subunits: a(1), b(2) and c(9-12). The alpha and beta chains form an alternating ring which encloses part of the gamma chain. CF(1) is attached to CF(0) by a central stalk formed by the gamma and epsilon chains, while a peripheral stalk is formed by the delta and b chains.

It is found in the cell membrane. It carries out the reaction ATP + H2O + 4 H(+)(in) = ADP + phosphate + 5 H(+)(out). Its function is as follows. Produces ATP from ADP in the presence of a proton gradient across the membrane. The alpha chain is a regulatory subunit. The protein is ATP synthase subunit alpha (atpA) of Ureaplasma parvum serovar 3 (strain ATCC 27815 / 27 / NCTC 11736).